The following is a 394-amino-acid chain: D-aspartate oxidase (394 aa).

Positions 19, 57, 58, and 62 each coordinate FAD. A helical transmembrane segment spans residues 190 to 210 (LIGHEPTAGVIVCVGLGALVL). N214 carries an N-linked (GlcNAc...) asparagine glycan. Residues R342, G373, and Q375 each contribute to the FAD site.

It belongs to the DAMOX/DASOX family. It depends on FAD as a cofactor.

The protein localises to the membrane. The catalysed reaction is D-aspartate + O2 + H2O = oxaloacetate + H2O2 + NH4(+). Selectively catalyzes the oxidative deamination of acidic amino acids. Protects the organism from the toxicity of D-amino acids. Enables the organism to utilize D-amino acids as a source of nutrients. Enables the organism to utilize D-aspartate and D-asparagine as a source of nitrogen. May play a role in its interaction with the host. This Cryptococcus neoformans var. grubii serotype A (strain H99 / ATCC 208821 / CBS 10515 / FGSC 9487) (Filobasidiella neoformans var. grubii) protein is D-aspartate oxidase.